A 187-amino-acid chain; its full sequence is Elongation factor P (187 aa).

Belongs to the elongation factor P family.

It is found in the cytoplasm. It functions in the pathway protein biosynthesis; polypeptide chain elongation. Functionally, involved in peptide bond synthesis. Stimulates efficient translation and peptide-bond synthesis on native or reconstituted 70S ribosomes in vitro. Probably functions indirectly by altering the affinity of the ribosome for aminoacyl-tRNA, thus increasing their reactivity as acceptors for peptidyl transferase. The chain is Elongation factor P from Parasynechococcus marenigrum (strain WH8102).